Reading from the N-terminus, the 338-residue chain is Glyceraldehyde-3-phosphate dehydrogenase (338 aa).

NAD(+) is bound by residues R12–I13, D34, and R80. Residues S151–T153, T182, T211–G212, and R234 each bind D-glyceraldehyde 3-phosphate. Residue C152 is the Nucleophile of the active site. N316 lines the NAD(+) pocket.

Belongs to the glyceraldehyde-3-phosphate dehydrogenase family. In terms of assembly, homotetramer.

The protein localises to the cytoplasm. The catalysed reaction is D-glyceraldehyde 3-phosphate + phosphate + NAD(+) = (2R)-3-phospho-glyceroyl phosphate + NADH + H(+). The protein operates within carbohydrate degradation; glycolysis; pyruvate from D-glyceraldehyde 3-phosphate: step 1/5. This chain is Glyceraldehyde-3-phosphate dehydrogenase (GPD), found in Paracoccidioides lutzii (strain ATCC MYA-826 / Pb01) (Paracoccidioides brasiliensis).